The chain runs to 424 residues: Proline--tRNA ligase (424 aa).

Belongs to the class-II aminoacyl-tRNA synthetase family. ProS type 2 subfamily. In terms of assembly, homodimer.

The protein resides in the cytoplasm. The enzyme catalyses tRNA(Pro) + L-proline + ATP = L-prolyl-tRNA(Pro) + AMP + diphosphate. Functionally, catalyzes the attachment of proline to tRNA(Pro) in a two-step reaction: proline is first activated by ATP to form Pro-AMP and then transferred to the acceptor end of tRNA(Pro). In Ehrlichia canis (strain Jake), this protein is Proline--tRNA ligase.